We begin with the raw amino-acid sequence, 555 residues long: MTRHDATRVIRAATGTTLTAKSWLTEAPLRMLMNNLDPDVAERPQELVVYGGIGRAARDWESFDAIVAALTRLDEDHTLLVQSGKPVGVFRTHADAPRVLIANSNLVPRWANWDHFNELDQKGLAMYGQMTAGSWIYIGAQGIVQGTYETFVEMGRQHYDGNLAGKWLFTGGLGGMGGAQPLAAVMAGASCLAVECRRSSIDMRLRTGYLDTWTDSLDEALRLIEESCTARKPLSVGLLGNVADVLDELLLRGIRPDLLTDQTSAHDPVNGYLPQGWSVEEWDAKRVSAPKEVEAAARDSMANHIRAMLTFHALGVPTVDYGNNLRQMALEAGVDNAFDFPGFVPAYIRPLFCRGIGPFRWVALSGDPDDIAKTDAKVKELIPDDAHLHRWLDMAADKIAFQGLPARICWVGLGDRHRLGLAFNAMVRSGELKAPVVIGRDHLDSGSVASPNRETEAMADGSDAVSDWPLLNALLNTASGATWVSLHHGGGVGMGFSQHAGMVIVCDGSEAADKRLERVLWNDPATGVMRHADAGYAIATDCAKAKGLDLPGILR.

NAD(+) contacts are provided by residues 51-52 (GG), Q129, 175-177 (GMG), E195, 262-266 (QTSAH), 272-273 (YL), and Y321. The active site involves C409. G491 provides a ligand contact to NAD(+).

Belongs to the urocanase family. NAD(+) serves as cofactor.

The protein resides in the cytoplasm. It catalyses the reaction 4-imidazolone-5-propanoate = trans-urocanate + H2O. It functions in the pathway amino-acid degradation; L-histidine degradation into L-glutamate; N-formimidoyl-L-glutamate from L-histidine: step 2/3. Catalyzes the conversion of urocanate to 4-imidazolone-5-propionate. This chain is Urocanate hydratase, found in Xanthomonas axonopodis pv. citri (strain 306).